Reading from the N-terminus, the 237-residue chain is Small ribosomal subunit protein eS4 (237 aa).

The 73-residue stretch at 38–110 (LPLAVVVRDV…EAKYYDLKPI (73 aa)) folds into the S4 RNA-binding domain.

The protein belongs to the eukaryotic ribosomal protein eS4 family.

This chain is Small ribosomal subunit protein eS4, found in Pyrobaculum calidifontis (strain DSM 21063 / JCM 11548 / VA1).